Here is a 222-residue protein sequence, read N- to C-terminus: Deoxyribose-phosphate aldolase (222 aa).

Residue D91 is the Proton donor/acceptor of the active site. K153 serves as the catalytic Schiff-base intermediate with acetaldehyde. K182 serves as the catalytic Proton donor/acceptor.

Belongs to the DeoC/FbaB aldolase family. DeoC type 1 subfamily.

It is found in the cytoplasm. It carries out the reaction 2-deoxy-D-ribose 5-phosphate = D-glyceraldehyde 3-phosphate + acetaldehyde. It functions in the pathway carbohydrate degradation; 2-deoxy-D-ribose 1-phosphate degradation; D-glyceraldehyde 3-phosphate and acetaldehyde from 2-deoxy-alpha-D-ribose 1-phosphate: step 2/2. Catalyzes a reversible aldol reaction between acetaldehyde and D-glyceraldehyde 3-phosphate to generate 2-deoxy-D-ribose 5-phosphate. The protein is Deoxyribose-phosphate aldolase of Mycoplasma capricolum subsp. capricolum (strain California kid / ATCC 27343 / NCTC 10154).